The primary structure comprises 367 residues: Peptide chain release factor 2 (367 aa).

Q254 is modified (N5-methylglutamine).

It belongs to the prokaryotic/mitochondrial release factor family. Post-translationally, methylated by PrmC. Methylation increases the termination efficiency of RF2.

It is found in the cytoplasm. Functionally, peptide chain release factor 2 directs the termination of translation in response to the peptide chain termination codons UGA and UAA. The polypeptide is Peptide chain release factor 2 (Leptospira interrogans serogroup Icterohaemorrhagiae serovar Lai (strain 56601)).